The primary structure comprises 253 residues: Phosphoglycerate mutase 2 (253 aa).

Phosphothreonine is present on T3. Residues R10 to N17, C23 to G24, R62, E89 to Y92, K100, and R116 to R117 contribute to the substrate site. The active-site Tele-phosphohistidine intermediate is the H11. Phosphoserine occurs at positions 14 and 15. The active-site Proton donor/acceptor is the E89. S118 is subject to Phosphoserine. The residue at position 121 (T121) is a Phosphothreonine. Phosphotyrosine occurs at positions 132 and 133. S135 bears the Phosphoserine mark. At T152 the chain carries Phosphothreonine. G187 to N188 contributes to the substrate binding site.

This sequence belongs to the phosphoglycerate mutase family. BPG-dependent PGAM subfamily. As to quaternary structure, homodimer. Interacts with ENO1.

It carries out the reaction (2R)-2-phosphoglycerate = (2R)-3-phosphoglycerate. The enzyme catalyses (2R)-3-phospho-glyceroyl phosphate = (2R)-2,3-bisphosphoglycerate + H(+). Interconversion of 3- and 2-phosphoglycerate with 2,3-bisphosphoglycerate as the primer of the reaction. Can also catalyze the reaction of EC 5.4.2.4 (synthase), but with a reduced activity. The sequence is that of Phosphoglycerate mutase 2 (Pgam2) from Rattus norvegicus (Rat).